The sequence spans 359 residues: 3-dehydroquinate synthase (359 aa).

NAD(+) is bound by residues 70 to 75 (DGEQYK), 105 to 109 (GVIGD), 129 to 130 (TT), Lys-142, Lys-151, and 169 to 172 (FYKT). The Zn(2+) site is built by Glu-184, His-247, and His-264.

Belongs to the sugar phosphate cyclases superfamily. Dehydroquinate synthase family. Co(2+) serves as cofactor. Zn(2+) is required as a cofactor. Requires NAD(+) as cofactor.

The protein resides in the cytoplasm. It carries out the reaction 7-phospho-2-dehydro-3-deoxy-D-arabino-heptonate = 3-dehydroquinate + phosphate. Its pathway is metabolic intermediate biosynthesis; chorismate biosynthesis; chorismate from D-erythrose 4-phosphate and phosphoenolpyruvate: step 2/7. Its function is as follows. Catalyzes the conversion of 3-deoxy-D-arabino-heptulosonate 7-phosphate (DAHP) to dehydroquinate (DHQ). This chain is 3-dehydroquinate synthase, found in Francisella tularensis subsp. tularensis (strain WY96-3418).